The primary structure comprises 719 residues: UvrABC system protein B (719 aa).

The 387-residue stretch at 49 to 435 folds into the Helicase ATP-binding domain; that stretch reads RRINAGERDV…TGGEFVEQVI (387 aa). Position 62–69 (62–69) interacts with ATP; it reads GATGTGKS. The short motif at 115–138 is the Beta-hairpin element; that stretch reads YYDYYQPEAYIAQTDTYIEKDSSI. The Helicase C-terminal domain occupies 453 to 606; that stretch reads QIDDLIGEIR…QIAYNEANGI (154 aa). The tract at residues 635–654 is disordered; that stretch reads GGSGRNASRGRRAQGEPGRA. One can recognise a UVR domain in the interval 674-709; the sequence is ADLIKDLTAQMMAAARDLQFELAARFRDEIADLKRE.

It belongs to the UvrB family. As to quaternary structure, forms a heterotetramer with UvrA during the search for lesions. Interacts with UvrC in an incision complex.

The protein localises to the cytoplasm. Its function is as follows. The UvrABC repair system catalyzes the recognition and processing of DNA lesions. A damage recognition complex composed of 2 UvrA and 2 UvrB subunits scans DNA for abnormalities. Upon binding of the UvrA(2)B(2) complex to a putative damaged site, the DNA wraps around one UvrB monomer. DNA wrap is dependent on ATP binding by UvrB and probably causes local melting of the DNA helix, facilitating insertion of UvrB beta-hairpin between the DNA strands. Then UvrB probes one DNA strand for the presence of a lesion. If a lesion is found the UvrA subunits dissociate and the UvrB-DNA preincision complex is formed. This complex is subsequently bound by UvrC and the second UvrB is released. If no lesion is found, the DNA wraps around the other UvrB subunit that will check the other stand for damage. This Mycobacterium tuberculosis (strain CDC 1551 / Oshkosh) protein is UvrABC system protein B.